The sequence spans 377 residues: 3-dehydroquinate synthase (377 aa).

NAD(+)-binding positions include 113 to 117 (GVIGD), 137 to 138 (TT), K150, and K159. Residues E192, H254, and H273 each contribute to the Zn(2+) site.

The protein belongs to the sugar phosphate cyclases superfamily. Dehydroquinate synthase family. It depends on Co(2+) as a cofactor. Zn(2+) is required as a cofactor. The cofactor is NAD(+).

The protein localises to the cytoplasm. The enzyme catalyses 7-phospho-2-dehydro-3-deoxy-D-arabino-heptonate = 3-dehydroquinate + phosphate. It functions in the pathway metabolic intermediate biosynthesis; chorismate biosynthesis; chorismate from D-erythrose 4-phosphate and phosphoenolpyruvate: step 2/7. Catalyzes the conversion of 3-deoxy-D-arabino-heptulosonate 7-phosphate (DAHP) to dehydroquinate (DHQ). This is 3-dehydroquinate synthase from Bartonella bacilliformis (strain ATCC 35685 / KC583 / Herrer 020/F12,63).